A 148-amino-acid polypeptide reads, in one-letter code: Dermatopontin (148 aa).

A disulfide bond links Cys14 and Cys40. An N-linked (GlcNAc...) asparagine glycan is attached at Asn44. 2 disulfides stabilise this stretch: Cys66/Cys93 and Cys103/Cys147.

It belongs to the dermatopontin family. In terms of processing, the terminal mannose residues of the polysaccharide are 3-O-methylated. No tyrosine sulfation was detected.

It localises to the secreted. The protein localises to the extracellular space. It is found in the extracellular matrix. Seems to mediate adhesion by cell surface integrin binding. This Biomphalaria glabrata (Bloodfluke planorb) protein is Dermatopontin.